We begin with the raw amino-acid sequence, 186 residues long: Peptidyl-tRNA hydrolase (186 aa).

Y14 serves as a coordination point for tRNA. The Proton acceptor role is filled by H19. The tRNA site is built by Y64, N66, and N112.

Belongs to the PTH family. As to quaternary structure, monomer.

It is found in the cytoplasm. It carries out the reaction an N-acyl-L-alpha-aminoacyl-tRNA + H2O = an N-acyl-L-amino acid + a tRNA + H(+). Functionally, hydrolyzes ribosome-free peptidyl-tRNAs (with 1 or more amino acids incorporated), which drop off the ribosome during protein synthesis, or as a result of ribosome stalling. In terms of biological role, catalyzes the release of premature peptidyl moieties from peptidyl-tRNA molecules trapped in stalled 50S ribosomal subunits, and thus maintains levels of free tRNAs and 50S ribosomes. The sequence is that of Peptidyl-tRNA hydrolase from Lachnospira eligens (strain ATCC 27750 / DSM 3376 / VPI C15-48 / C15-B4) (Eubacterium eligens).